The chain runs to 162 residues: Eukaryotic translation initiation factor 5 (162 aa).

The interval 59 to 162 (PPNLNPAVQG…EKDRMDIFYE (104 aa)) is disordered. Residues 85–109 (GDTNGDTSQVDDQNESLEASVNENS) are compositionally biased toward polar residues. Basic and acidic residues predominate over residues 148-162 (DLEKREKDRMDIFYE).

The protein belongs to the eIF-2-beta/eIF-5 family.

Its function is as follows. Catalyzes the hydrolysis of GTP bound to the 40S ribosomal initiation complex (40S.mRNA.Met-tRNA[F].eIF-2.GTP) with the subsequent joining of a 60S ribosomal subunit resulting in the release of eIF-2 and the guanine nucleotide. The subsequent joining of a 60S ribosomal subunit results in the formation of a functional 80S initiation complex (80S.mRNA.Met-tRNA[F]). The sequence is that of Eukaryotic translation initiation factor 5 from Tribolium castaneum (Red flour beetle).